A 332-amino-acid chain; its full sequence is Phosphatidylglycerol--prolipoprotein diacylglyceryl transferase (332 aa).

3 helical membrane passes run 18-38 (FPYFRWYGFMYVVAFSIAYIL), 66-86 (FFTWTILGILIGARVFSTMVY), and 111-131 (VGLRGMSYHGGLIGALVGGGL). Position 159 (R159) interacts with a 1,2-diacyl-sn-glycero-3-phospho-(1'-sn-glycerol). 2 helical membrane-spanning segments follow: residues 249-269 (GFLVCLYVVGYGVFRFFIEYF) and 302-322 (ILCVLMILAGLGGMFALSAYH).

The protein belongs to the Lgt family.

It is found in the cell inner membrane. The enzyme catalyses L-cysteinyl-[prolipoprotein] + a 1,2-diacyl-sn-glycero-3-phospho-(1'-sn-glycerol) = an S-1,2-diacyl-sn-glyceryl-L-cysteinyl-[prolipoprotein] + sn-glycerol 1-phosphate + H(+). Its pathway is protein modification; lipoprotein biosynthesis (diacylglyceryl transfer). Its function is as follows. Catalyzes the transfer of the diacylglyceryl group from phosphatidylglycerol to the sulfhydryl group of the N-terminal cysteine of a prolipoprotein, the first step in the formation of mature lipoproteins. The chain is Phosphatidylglycerol--prolipoprotein diacylglyceryl transferase from Treponema pallidum (strain Nichols).